We begin with the raw amino-acid sequence, 62 residues long: Photosystem II reaction center protein Z (62 aa).

A run of 2 helical transmembrane segments spans residues 8–28 (AIFA…VVFA) and 41–61 (FSGT…NSLI).

The protein belongs to the PsbZ family. In terms of assembly, PSII is composed of 1 copy each of membrane proteins PsbA, PsbB, PsbC, PsbD, PsbE, PsbF, PsbH, PsbI, PsbJ, PsbK, PsbL, PsbM, PsbT, PsbY, PsbZ, Psb30/Ycf12, at least 3 peripheral proteins of the oxygen-evolving complex and a large number of cofactors. It forms dimeric complexes.

It is found in the plastid. The protein resides in the chloroplast thylakoid membrane. Functionally, may control the interaction of photosystem II (PSII) cores with the light-harvesting antenna, regulates electron flow through the 2 photosystem reaction centers. PSII is a light-driven water plastoquinone oxidoreductase, using light energy to abstract electrons from H(2)O, generating a proton gradient subsequently used for ATP formation. This Acorus gramineus (Dwarf sweet flag) protein is Photosystem II reaction center protein Z.